A 423-amino-acid polypeptide reads, in one-letter code: UDP-N-acetylglucosamine 1-carboxyvinyltransferase 1 (423 aa).

Phosphoenolpyruvate is bound at residue 23–24 (KN). Position 96 (arginine 96) interacts with UDP-N-acetyl-alpha-D-glucosamine. Catalysis depends on cysteine 120, which acts as the Proton donor. Cysteine 120 is subject to 2-(S-cysteinyl)pyruvic acid O-phosphothioketal. Residues aspartate 309 and valine 331 each coordinate UDP-N-acetyl-alpha-D-glucosamine.

This sequence belongs to the EPSP synthase family. MurA subfamily.

Its subcellular location is the cytoplasm. The catalysed reaction is phosphoenolpyruvate + UDP-N-acetyl-alpha-D-glucosamine = UDP-N-acetyl-3-O-(1-carboxyvinyl)-alpha-D-glucosamine + phosphate. It participates in cell wall biogenesis; peptidoglycan biosynthesis. Functionally, cell wall formation. Adds enolpyruvyl to UDP-N-acetylglucosamine. In Streptococcus pyogenes serotype M3 (strain ATCC BAA-595 / MGAS315), this protein is UDP-N-acetylglucosamine 1-carboxyvinyltransferase 1.